The following is a 125-amino-acid chain: Large ribosomal subunit protein eL31 (125 aa).

Met1 carries the N-acetylmethionine modification. Ser15 carries the post-translational modification Phosphoserine. Lys55 and Lys70 each carry N6-succinyllysine. An N6-acetyllysine; alternate modification is found at Lys75. Lys75 carries the post-translational modification N6-succinyllysine; alternate. Ser98 is subject to Phosphoserine.

Belongs to the eukaryotic ribosomal protein eL31 family. In terms of assembly, component of the large ribosomal subunit.

It localises to the cytoplasm. In terms of biological role, component of the large ribosomal subunit. The ribosome is a large ribonucleoprotein complex responsible for the synthesis of proteins in the cell. This is Large ribosomal subunit protein eL31 (RPL31) from Oryctolagus cuniculus (Rabbit).